Reading from the N-terminus, the 191-residue chain is Cell division protein SepF (191 aa).

The span at 150–164 (TSSSPEEASPSSVST) shows a compositional bias: low complexity. Positions 150–191 (TSSSPEEASPSSVSTENTPQYSLGKNTTPEPAWGNSKLSAYS) are disordered. Residues 165 to 178 (ENTPQYSLGKNTTP) show a composition bias toward polar residues.

This sequence belongs to the SepF family. Homodimer. Interacts with FtsZ.

The protein resides in the cytoplasm. In terms of biological role, cell division protein that is part of the divisome complex and is recruited early to the Z-ring. Probably stimulates Z-ring formation, perhaps through the cross-linking of FtsZ protofilaments. Its function overlaps with FtsA. The sequence is that of Cell division protein SepF from Prochlorococcus marinus (strain AS9601).